Reading from the N-terminus, the 462-residue chain is Elongation factor 1-alpha, somatic form (462 aa).

N,N,N-trimethylglycine is present on Gly2. A tr-type G domain is found at 5–242 (KTHINIVVIG…DCILPPSRPT (238 aa)). Residues 14–21 (GHVDSGKS) are G1. 14 to 21 (GHVDSGKS) is a GTP binding site. The interval 70–74 (GITID) is G2. Residues 91–94 (DAPG) are G3. GTP-binding positions include 91 to 95 (DAPGH) and 153 to 156 (NKMD). Residues 153 to 156 (NKMD) are G4. The interval 194–196 (SGW) is G5. Residues Glu301 and Glu374 each carry the 5-glutamyl glycerylphosphorylethanolamine modification.

It belongs to the TRAFAC class translation factor GTPase superfamily. Classic translation factor GTPase family. EF-Tu/EF-1A subfamily.

Its subcellular location is the cytoplasm. Functionally, this protein promotes the GTP-dependent binding of aminoacyl-tRNA to the A-site of ribosomes during protein biosynthesis. The protein is Elongation factor 1-alpha, somatic form (eef1as) of Xenopus laevis (African clawed frog).